We begin with the raw amino-acid sequence, 594 residues long: UvrABC system protein C (594 aa).

One can recognise a GIY-YIG domain in the interval 14 to 91 (DQPGCYLMKD…IKKHDPKYNI (78 aa)). Residues 196 to 231 (KEVRSELETKMYEASEKLEFERAKELRDQIAHIDAI) form the UVR domain.

The protein belongs to the UvrC family. As to quaternary structure, interacts with UvrB in an incision complex.

The protein resides in the cytoplasm. Its function is as follows. The UvrABC repair system catalyzes the recognition and processing of DNA lesions. UvrC both incises the 5' and 3' sides of the lesion. The N-terminal half is responsible for the 3' incision and the C-terminal half is responsible for the 5' incision. The protein is UvrABC system protein C of Bacillus anthracis (strain A0248).